Reading from the N-terminus, the 145-residue chain is Nicking endonuclease (145 aa).

A disordered region spans residues 126 to 145 (NPQEKTQVKTETKSGFARFL).

In terms of biological role, endonuclease responsible for the single-chain interruptions (nicks) located at specific positions in the minus strand of the viral genome. This chain is Nicking endonuclease, found in Escherichia phage T5 (Enterobacteria phage T5).